We begin with the raw amino-acid sequence, 565 residues long: Urocanate hydratase (565 aa).

NAD(+)-binding positions include 58–59, Q136, 182–184, E202, R207, 245–246, 266–270, 276–277, and Y325; these read GG, GMG, NA, QTSAH, and YL. C413 is a catalytic residue. G495 provides a ligand contact to NAD(+).

Belongs to the urocanase family. It depends on NAD(+) as a cofactor.

It is found in the cytoplasm. It carries out the reaction 4-imidazolone-5-propanoate = trans-urocanate + H2O. Its pathway is amino-acid degradation; L-histidine degradation into L-glutamate; N-formimidoyl-L-glutamate from L-histidine: step 2/3. In terms of biological role, catalyzes the conversion of urocanate to 4-imidazolone-5-propionate. The protein is Urocanate hydratase of Vibrio vulnificus (strain CMCP6).